A 180-amino-acid chain; its full sequence is Signal peptidase complex subunit 2 (180 aa).

At Met-1 to Arg-45 the chain is on the cytoplasmic side. The helical transmembrane segment at Leu-46–Glu-66 threads the bilayer. Topologically, residues Pro-67–Lys-72 are lumenal. Residues Ile-73–Gln-93 form a helical membrane-spanning segment. Topologically, residues Trp-94–Gln-180 are cytoplasmic.

Belongs to the SPCS2 family. As to quaternary structure, component of the signal peptidase complex (SPC) composed of a catalytic subunit sec-11 and three accessory subunits spcs-1, spcs-2 and spcs-3. The complex induces a local thinning of the ER membrane which is used to measure the length of the signal peptide (SP) h-region of protein substrates. This ensures the selectivity of the complex towards h-regions shorter than 18-20 amino acids.

Its subcellular location is the endoplasmic reticulum membrane. Component of the signal peptidase complex (SPC) which catalyzes the cleavage of N-terminal signal sequences from nascent proteins as they are translocated into the lumen of the endoplasmic reticulum. Enhances the enzymatic activity of SPC and facilitates the interactions between different components of the translocation site. The chain is Signal peptidase complex subunit 2 from Caenorhabditis elegans.